A 670-amino-acid polypeptide reads, in one-letter code: Segment polarity protein dishevelled homolog DVL-1 (670 aa).

Residues 1 to 85 (MAETKIIYHM…RVVSWLVLAE (85 aa)) form the DIX domain. The interval 89-237 (SDAGSQGTDS…LRQADRASSF (149 aa)) is disordered. Residues 142-151 (SHRRERARRR) are compositionally biased toward basic residues. A compositionally biased stretch (basic and acidic residues) spans 152 to 171 (NREEAARTNGHPRGDRRRDV). Residues 176 to 192 (DSASTALSSELESSSFV) are compositionally biased toward low complexity. Phosphoserine is present on Ser-194. Over residues 200–214 (TSRLSSSTEQSTSSR) the composition is skewed to low complexity. The segment covering 215 to 228 (LIRKHKRRRRKQRL) has biased composition (basic residues). The 73-residue stretch at 251-323 (TVTLNMERHH…NDDAVRVLRE (73 aa)) folds into the PDZ domain. The region spanning 400-474 (PDSGLEIRDR…SEQCYYVFGD (75 aa)) is the DEP domain. The interval 518–642 (PGPPPCFPPA…PGGPPVRELA (125 aa)) is disordered. A compositionally biased stretch (low complexity) spans 526 to 555 (PAYQDPGFSYGSGSTGSQQSEGSKSSGSTR). The segment covering 600–611 (SRGSSPRSQASA) has biased composition (polar residues).

The protein belongs to the DSH family. Interacts with CXXC4. Interacts (via PDZ domain) with NXN. Interacts with BRD7 and INVS. Interacts (via PDZ domain) with VANGL1 and VANGL2 (via C-terminus). Interacts with ARRB1; the interaction is enhanced by phosphorylation of DVL1. Interacts with CYLD. Interacts (via PDZ domain) with RYK. Self-associates (via DIX domain) and forms higher homooligomers. Interacts (via PDZ domain) with DACT1 and FZD7, where DACT1 and FZD7 compete for the same binding site. Interacts (via DEP domain) with MUSK; the interaction is direct and mediates the formation a DVL1, MUSK and PAK1 ternary complex involved in AChR clustering. Interacts (via PDZ domain) with TMEM88. Interacts with DCDC2. Interacts with FOXK2. Interacts with PKD1 (via extracellular domain). Interacts (via PDZ domain) with CCDC88C/DAPLE; competes with CCDC88C for binding to frizzled receptor FZD7 and dissociates from CCDC88C following initiation of non-canonical Wnt signaling when CCDC88C displaces DVL1 from ligand-activated FZD7. In terms of processing, ubiquitinated; undergoes both 'Lys-48'-linked ubiquitination, leading to its subsequent degradation by the ubiquitin-proteasome pathway, and 'Lys-63'-linked ubiquitination. The interaction with INVS is required for ubiquitination. Deubiquitinated by CYLD, which acts on 'Lys-63'-linked ubiquitin chains.

The protein resides in the cell membrane. It localises to the cytoplasm. The protein localises to the cytosol. It is found in the cytoplasmic vesicle. Participates in Wnt signaling by binding to the cytoplasmic C-terminus of frizzled family members and transducing the Wnt signal to down-stream effectors. Plays a role both in canonical and non-canonical Wnt signaling. Plays a role in the signal transduction pathways mediated by multiple Wnt genes. Required for LEF1 activation upon WNT1 and WNT3A signaling. DVL1 and PAK1 form a ternary complex with MUSK which is important for MUSK-dependent regulation of AChR clustering during the formation of the neuromuscular junction (NMJ). This chain is Segment polarity protein dishevelled homolog DVL-1 (DVL1), found in Pan troglodytes (Chimpanzee).